The following is a 625-amino-acid chain: Acetolactate synthase (625 aa).

Residues 1-29 (MSAPTKPHARPQGAGNSVPNTVKPATQFP) form a disordered region. Over residues 14 to 29 (AGNSVPNTVKPATQFP) the composition is skewed to polar residues. Glutamate 92 serves as a coordination point for thiamine diphosphate. FAD-binding positions include arginine 194, 300–321 (HGTVAAVAALQRSDLLIALGTR), and 343–362 (DIDPAEIGKNRHADVPIVGD). The thiamine pyrophosphate binding stretch occupies residues 436-516 (QHQMWAAQFI…IKVALINNGN (81 aa)). The Mg(2+) site is built by aspartate 487 and asparagine 514.

The protein belongs to the TPP enzyme family. Mg(2+) serves as cofactor. Thiamine diphosphate is required as a cofactor.

The catalysed reaction is 2 pyruvate + H(+) = (2S)-2-acetolactate + CO2. Its pathway is amino-acid biosynthesis; L-isoleucine biosynthesis; L-isoleucine from 2-oxobutanoate: step 1/4. The protein operates within amino-acid biosynthesis; L-valine biosynthesis; L-valine from pyruvate: step 1/4. In Mycobacterium leprae (strain TN), this protein is Acetolactate synthase (ilvB).